Reading from the N-terminus, the 580-residue chain is 2-isopropylmalate synthase (580 aa).

The segment covering M1–T11 has biased composition (polar residues). Residues M1 to R37 are disordered. The Pyruvate carboxyltransferase domain maps to P61–D334. Residues D70, H273, H275, and N309 each coordinate Mg(2+). The segment at E476–G580 is regulatory domain.

This sequence belongs to the alpha-IPM synthase/homocitrate synthase family. LeuA type 2 subfamily. In terms of assembly, homodimer. Mg(2+) is required as a cofactor.

It is found in the cytoplasm. It catalyses the reaction 3-methyl-2-oxobutanoate + acetyl-CoA + H2O = (2S)-2-isopropylmalate + CoA + H(+). It participates in amino-acid biosynthesis; L-leucine biosynthesis; L-leucine from 3-methyl-2-oxobutanoate: step 1/4. Catalyzes the condensation of the acetyl group of acetyl-CoA with 3-methyl-2-oxobutanoate (2-ketoisovalerate) to form 3-carboxy-3-hydroxy-4-methylpentanoate (2-isopropylmalate). The sequence is that of 2-isopropylmalate synthase from Nocardia farcinica (strain IFM 10152).